We begin with the raw amino-acid sequence, 538 residues long: Protein PNS1 (538 aa).

The span at 1 to 54 (MGESDAYYNGGQQQQYNGGYQQQYQPQPPAASYQAPPQQPYQQQPYQQGPPQNG) shows a compositional bias: low complexity. The tract at residues 1-67 (MGESDAYYNG…GNGYMPAQGY (67 aa)) is disordered. The Cytoplasmic segment spans residues 1–88 (MGESDAYYNG…FKIAKPKYND (88 aa)). Residues 89–109 (LWAGILLILVFAGFVVVSGLA) traverse the membrane as a helical segment. The Extracellular portion of the chain corresponds to 110–137 (LQGYSANKGNAGDGIYNNKNDFSPNTST). An N-linked (GlcNAc...) asparagine glycan is attached at Asn-134. A helical membrane pass occupies residues 138–158 (VILFMFVLAVAFVLSYAYVWM). Residues 159-165 (ARLFPKQ) are Cytoplasmic-facing. A helical transmembrane segment spans residues 166 to 186 (FIWVTGILNVCWAIGTAIFYL). The Extracellular portion of the chain corresponds to 187 to 191 (WRKYW). A helical membrane pass occupies residues 192–212 (SAGIVFLIFGLFMAFCFWTWI). At 213–239 (SRIPFSALMLKTTIDVSKKYGHVYLVS) the chain is on the cytoplasmic side. The chain crosses the membrane as a helical span at residues 240–260 (LIGGIIATAFSAWYAITLVGI). Residues 261–280 (YVKYQPAQDNPSCADGGCGK) are Extracellular-facing. The chain crosses the membrane as a helical span at residues 281-301 (GKVIGLIAFITFAMYWFSEWL). Topologically, residues 302-335 (KNTIHTTIAGVYGSWYFNPHNFPKDATRASAKRA) are cytoplasmic. The chain crosses the membrane as a helical span at residues 336–356 (LTYSFGSIALGSLLVAIIQFL). Topologically, residues 357–372 (RQICNAARNQEGADGS) are extracellular. The chain crosses the membrane as a helical span at residues 373–393 (FVGYAIFCCISCLLGLLEWAV). At 394 to 434 (EFINRYAFCHIALYGKAYFAAAKDTWKMIKDRGIDALINDC) the chain is on the cytoplasmic side. The helical transmembrane segment at 435–455 (LIGPVLSFGALFIAYACALLA) threads the bilayer. At 456 to 474 (YLYLYFTDPAYNSDGQYTA) the chain is on the extracellular side. A helical membrane pass occupies residues 475–495 (VVMAFSFLIGFQIANVFTTPI). Residues 496-538 (SSGIETIFVAAGWDPQVMWRDHPELYNEMVRVYPKVQQVIKDR) lie on the Cytoplasmic side of the membrane.

Belongs to the CTL (choline transporter-like) family.

It localises to the cell membrane. Probably involved in transport through the plasma membrane. In Gibberella zeae (strain ATCC MYA-4620 / CBS 123657 / FGSC 9075 / NRRL 31084 / PH-1) (Wheat head blight fungus), this protein is Protein PNS1 (PNS1).